A 416-amino-acid polypeptide reads, in one-letter code: Histidine--tRNA ligase (416 aa).

This sequence belongs to the class-II aminoacyl-tRNA synthetase family.

The protein localises to the cytoplasm. It carries out the reaction tRNA(His) + L-histidine + ATP = L-histidyl-tRNA(His) + AMP + diphosphate + H(+). This Methanocaldococcus jannaschii (strain ATCC 43067 / DSM 2661 / JAL-1 / JCM 10045 / NBRC 100440) (Methanococcus jannaschii) protein is Histidine--tRNA ligase (hisS).